A 579-amino-acid chain; its full sequence is Arginine--tRNA ligase (579 aa).

Positions proline 127 to histidine 137 match the 'HIGH' region motif.

It belongs to the class-I aminoacyl-tRNA synthetase family. In terms of assembly, monomer.

It localises to the cytoplasm. The enzyme catalyses tRNA(Arg) + L-arginine + ATP = L-arginyl-tRNA(Arg) + AMP + diphosphate. This is Arginine--tRNA ligase from Azotobacter vinelandii (strain DJ / ATCC BAA-1303).